A 275-amino-acid chain; its full sequence is Translation initiation factor 2 subunit alpha (275 aa).

The region spanning G12–K83 is the S1 motif domain.

This sequence belongs to the eIF-2-alpha family. As to quaternary structure, heterotrimer composed of an alpha, a beta and a gamma chain.

In terms of biological role, eIF-2 functions in the early steps of protein synthesis by forming a ternary complex with GTP and initiator tRNA. This chain is Translation initiation factor 2 subunit alpha, found in Thermococcus onnurineus (strain NA1).